Here is a 171-residue protein sequence, read N- to C-terminus: ATP synthase subunit b 2 (171 aa).

The chain crosses the membrane as a helical span at residues 9-29; it reads APWHHPVFWVAVAFVLFFVLF.

It belongs to the ATPase B chain family. In terms of assembly, F-type ATPases have 2 components, F(1) - the catalytic core - and F(0) - the membrane proton channel. F(1) has five subunits: alpha(3), beta(3), gamma(1), delta(1), epsilon(1). F(0) has three main subunits: a(1), b(2) and c(10-14). The alpha and beta chains form an alternating ring which encloses part of the gamma chain. F(1) is attached to F(0) by a central stalk formed by the gamma and epsilon chains, while a peripheral stalk is formed by the delta and b chains.

It localises to the cell inner membrane. In terms of biological role, f(1)F(0) ATP synthase produces ATP from ADP in the presence of a proton or sodium gradient. F-type ATPases consist of two structural domains, F(1) containing the extramembraneous catalytic core and F(0) containing the membrane proton channel, linked together by a central stalk and a peripheral stalk. During catalysis, ATP synthesis in the catalytic domain of F(1) is coupled via a rotary mechanism of the central stalk subunits to proton translocation. Its function is as follows. Component of the F(0) channel, it forms part of the peripheral stalk, linking F(1) to F(0). The polypeptide is ATP synthase subunit b 2 (Granulibacter bethesdensis (strain ATCC BAA-1260 / CGDNIH1)).